The following is a 191-amino-acid chain: Xanthine phosphoribosyltransferase (191 aa).

Xanthine-binding residues include Leu-20 and Asn-27. 128–132 (ANGQA) is a 5-phospho-alpha-D-ribose 1-diphosphate binding site. Lys-156 is a binding site for xanthine.

This sequence belongs to the purine/pyrimidine phosphoribosyltransferase family. Xpt subfamily. In terms of assembly, homodimer.

It is found in the cytoplasm. The catalysed reaction is XMP + diphosphate = xanthine + 5-phospho-alpha-D-ribose 1-diphosphate. It functions in the pathway purine metabolism; XMP biosynthesis via salvage pathway; XMP from xanthine: step 1/1. Its function is as follows. Converts the preformed base xanthine, a product of nucleic acid breakdown, to xanthosine 5'-monophosphate (XMP), so it can be reused for RNA or DNA synthesis. In Acinetobacter baylyi (strain ATCC 33305 / BD413 / ADP1), this protein is Xanthine phosphoribosyltransferase.